We begin with the raw amino-acid sequence, 864 residues long: Mitochondrial 15S rRNA processing factor CCM1 (864 aa).

Residues 1 to 76 (MYMARCGPKN…REFSNTLKER (76 aa)) constitute a mitochondrion transit peptide. 2 PPR repeats span residues 319–353 (NKQN…STKH) and 356–390 (DICT…NIKP).

Belongs to the CCM1 family. As to quaternary structure, binds to mitochondrial small subunit 15S rRNA.

The protein resides in the mitochondrion. Functionally, regulates mitochondrial small subunit maturation by controlling 15S rRNA 5'-end processing. Localizes to the 5' precursor of the 15S rRNA in a position that is subsequently occupied by mS47 in the mature yeast mtSSU. Uses structure and sequence-specific RNA recognition, binding to a single-stranded region of the precursor and specifically recognizing bases -6 to -1. The exchange of Ccm1 for mS47 is coupled to the irreversible removal of precursor rRNA that is accompanied by conformational changes of the mitoribosomal proteins uS5m and mS26. These conformational changes signal completion of 5'-end rRNA processing through protection of the mature 5'-end of the 15S rRNA and stabilization of mS47. The removal of the 5' precursor together with the dissociation of Ccm1 may be catalyzed by the 5'-3' exoribonuclease Pet127. Involved in the specific removal of group I introns in mitochondrial encoded transcripts. In Saccharomyces cerevisiae (strain YJM789) (Baker's yeast), this protein is Mitochondrial 15S rRNA processing factor CCM1 (CCM1).